The primary structure comprises 175 residues: Trafficking protein particle complex subunit 20 (175 aa).

The protein belongs to the TRAPP small subunits family. Sedlin subfamily. As to quaternary structure, part of the multisubunit TRAPP (transport protein particle) I complex composed of BET3, BET5, TRS20, TRS23, TRS31 and TRS33. Part of the multisubunit TRAPP (transport protein particle) II complex composed of BET3, BET5, TRS20, TRS23, TRS31, TRS33, TRS65, TRS85, TRS120 and TRS130. Part of the multisubunit TRAPP (transport protein particle) III complex composed of BET3, BET5, TRS20, TRS23, TRS31, TRS33 and TRS85.

The protein resides in the golgi apparatus. It localises to the cis-Golgi network. The protein localises to the endoplasmic reticulum. It is found in the preautophagosomal structure. Component of the TRAPP I, TRAPP II and TRAPP III complexes which act as guanine nucleotide exchange factors (GEF) for YPT1. TRAPP I plays a key role in the late stages of endoplasmic reticulum to Golgi traffic. TRAPP II plays a role in intra-Golgi transport. TRAPP III plays a role in autophagosome formation. The chain is Trafficking protein particle complex subunit 20 (TRS20) from Saccharomyces cerevisiae (strain ATCC 204508 / S288c) (Baker's yeast).